We begin with the raw amino-acid sequence, 1185 residues long: DNA-directed RNA polymerase subunit beta' (1185 aa).

Zn(2+) is bound by residues cysteine 60, cysteine 62, cysteine 75, and cysteine 78. Mg(2+)-binding residues include aspartate 449, aspartate 451, and aspartate 453. Zn(2+) contacts are provided by cysteine 774, cysteine 853, cysteine 860, and cysteine 863.

This sequence belongs to the RNA polymerase beta' chain family. As to quaternary structure, the RNAP catalytic core consists of 2 alpha, 1 beta, 1 beta' and 1 omega subunit. When a sigma factor is associated with the core the holoenzyme is formed, which can initiate transcription. Requires Mg(2+) as cofactor. Zn(2+) serves as cofactor.

It carries out the reaction RNA(n) + a ribonucleoside 5'-triphosphate = RNA(n+1) + diphosphate. In terms of biological role, DNA-dependent RNA polymerase catalyzes the transcription of DNA into RNA using the four ribonucleoside triphosphates as substrates. This is DNA-directed RNA polymerase subunit beta' from Desulforamulus reducens (strain ATCC BAA-1160 / DSM 100696 / MI-1) (Desulfotomaculum reducens).